Reading from the N-terminus, the 468-residue chain is Acyltransferase R4 (468 aa).

7 helical membrane passes run 21–41 (GILSIIIFNAHLTPIIILGYD), 70–90 (LFTIPIVKLVYSASPAVCLFF), 133–153 (LNLLAMASMIVPFVLVKTGFF), 252–272 (FLAALVVMGIAVGSLECPLFW), 308–328 (DPFGKAVVLAIGCYFASYPTW), 388–408 (FAVYLVHFCLVISFGPGLFSW), and 423–443 (IGFGIAYAVLFIGVLLAAAMF).

This sequence belongs to the acyltransferase 3 family.

It localises to the membrane. Its pathway is secondary metabolite biosynthesis. Its function is as follows. Acyltransferase; part of the gene cluster that mediates the biosynthesis of squalestatin S1 (SQS1, also known as zaragozic acid A), a heavily oxidized fungal polyketide that offers potent cholesterol lowering activity by targeting squalene synthase (SS). SQS1 is composed of a 2,8-dioxobicyclic[3.2.1]octane-3,4,5-tricarboxyclic acid core that is connected to two lipophilic polyketide arms. These initial steps feature the priming of an unusual benzoic acid starter unit onto the highly reducing polyketide synthase pks2, followed by oxaloacetate extension and product release to generate a tricarboxylic acid containing product. The phenylalanine ammonia lyase (PAL) M7 and the acyl-CoA ligase M9 are involved in transforming phenylalanine into benzoyl-CoA. The citrate synthase-like protein R3 is involved in connecting the C-alpha-carbons of the hexaketide chain and oxaloacetate to afford the tricarboxylic acid unit. The potential hydrolytic enzymes, M8 and M10, are in close proximity to pks2 and may participate in product release. On the other side, the tetraketide arm is synthesized by a the squalestatin tetraketide synthase pks1 and enzymatically esterified to the core in the last biosynthetic step, by the acetyltransferase M4. The biosynthesis of the tetraketide must involve 3 rounds of chain extension. After the first and second rounds methyl-transfer occurs, and in all rounds of extension the ketoreductase and dehydratase are active. The enoyl reductase and C-MeT of pks1 are not active in the final round of extension. The acetyltransferase M4 appears to have a broad substrate selectivity for its acyl CoA substrate, allowing the in vitro synthesis of novel squalestatins. The biosynthesis of SQS1 requires several oxidative steps likely performed by oxidoreductases M1, R1 and R2. Finally, in support of the identification of the cluster as being responsible for SQS1 production, the cluster contains a gene encoding a putative squalene synthase (SS) R6, suggesting a likely mechanism for self-resistance. This is Acyltransferase R4 from Phoma sp. (strain ATCC 20986 / MF5453).